The primary structure comprises 471 residues: 3-isopropylmalate dehydratase large subunit (471 aa).

3 residues coordinate [4Fe-4S] cluster: cysteine 347, cysteine 407, and cysteine 410.

The protein belongs to the aconitase/IPM isomerase family. LeuC type 1 subfamily. As to quaternary structure, heterodimer of LeuC and LeuD. [4Fe-4S] cluster serves as cofactor.

It catalyses the reaction (2R,3S)-3-isopropylmalate = (2S)-2-isopropylmalate. The protein operates within amino-acid biosynthesis; L-leucine biosynthesis; L-leucine from 3-methyl-2-oxobutanoate: step 2/4. Its function is as follows. Catalyzes the isomerization between 2-isopropylmalate and 3-isopropylmalate, via the formation of 2-isopropylmaleate. The chain is 3-isopropylmalate dehydratase large subunit from Prochlorococcus marinus (strain MIT 9211).